We begin with the raw amino-acid sequence, 674 residues long: Slender lobes-like protein (674 aa).

Disordered stretches follow at residues 65-137 (LEKS…NASK), 168-321 (NELN…TIKK), and 352-382 (QKSRRQSLHVPSPELAAKNPKLRRRSERVEV). Basic residues predominate over residues 73–97 (PKKKVQTKKHLPPVRKKDSVKRRRI). Over residues 127 to 137 (NQSNCSSNASK) the composition is skewed to polar residues. The segment covering 216–228 (VDSDDEEEQDQDQ) has biased composition (acidic residues). Basic and acidic residues predominate over residues 233–245 (KPAESENHSEIKK). The residue at position 248 (serine 248) is a Phosphoserine. Residues 272–312 (EDPKEAGKNEESDKDKPAENGKSDKDKQAETEMSDEDKPSE) show a composition bias toward basic and acidic residues. A phosphoserine mark is found at serine 358 and serine 391. Disordered regions lie at residues 395-585 (MVAE…AGYV) and 618-659 (KYFR…NSAK). Residues 400–410 (KRQKNKRKRLS) show a composition bias toward basic residues. Phosphoserine is present on serine 414. A compositionally biased stretch (basic residues) spans 548–558 (AKQKKKGKKKQ).

This Drosophila melanogaster (Fruit fly) protein is Slender lobes-like protein.